We begin with the raw amino-acid sequence, 134 residues long: Galectin-1 (134 aa).

Ala-1 carries the post-translational modification N-acetylalanine. One can recognise a Galectin domain in the interval 4–134 (GVAVTNLNLK…GLAFKSITTE (131 aa)). A beta-D-galactoside is bound by residues 45–49 (HFNAR), His-53, Asn-62, and 69–72 (WGSE).

As to quaternary structure, homodimer.

The protein resides in the secreted. The protein localises to the extracellular space. It localises to the extracellular matrix. Its function is as follows. May regulate cell apoptosis and cell differentiation. Binds beta-galactoside and a wide array of complex carbohydrates. The chain is Galectin-1 from Rhinella arenarum (Argentine common toad).